The primary structure comprises 324 residues: Lactonase drp35 (324 aa).

Ca(2+) is bound by residues E47, S109, G111, D129, T132, Y134, D137, N184, D235, and S236. The active-site Proton donor is the D235.

It belongs to the SMP-30/CGR1 family. Ca(2+) serves as cofactor.

The protein resides in the cytoplasm. Functionally, exhibits lactonase activity. Acts in cells with perturbed membrane integrity and is possibly related to the membrane homeostasis. In Staphylococcus aureus (strain MW2), this protein is Lactonase drp35 (drp35).